A 339-amino-acid polypeptide reads, in one-letter code: Protein-lysine N-methyltransferase EFM3 (339 aa).

S-adenosyl-L-methionine is bound by residues W137 and 174 to 176; that span reads GAG. Residue T177 is modified to Phosphothreonine. S-adenosyl-L-methionine is bound by residues D199, W233, and A248.

This sequence belongs to the class I-like SAM-binding methyltransferase superfamily. EEF2KMT family.

Its subcellular location is the cytoplasm. Functionally, S-adenosyl-L-methionine-dependent protein-lysine N-methyltransferase that mono-, di- and trimethylates elongation factor 2 (EFT1/EFT2) at 'Lys-509'. This is Protein-lysine N-methyltransferase EFM3 from Saccharomyces cerevisiae (strain ATCC 204508 / S288c) (Baker's yeast).